The primary structure comprises 190 residues: Elongation factor P 2 (190 aa).

Belongs to the elongation factor P family.

The protein resides in the cytoplasm. The protein operates within protein biosynthesis; polypeptide chain elongation. Functionally, involved in peptide bond synthesis. Stimulates efficient translation and peptide-bond synthesis on native or reconstituted 70S ribosomes in vitro. Probably functions indirectly by altering the affinity of the ribosome for aminoacyl-tRNA, thus increasing their reactivity as acceptors for peptidyl transferase. The sequence is that of Elongation factor P 2 (efp2) from Chlamydia caviae (strain ATCC VR-813 / DSM 19441 / 03DC25 / GPIC) (Chlamydophila caviae).